The chain runs to 75 residues: ATP synthase subunit c (75 aa).

The next 2 membrane-spanning stretches (helical) occupy residues 8–28 (FLGI…VSNI) and 54–74 (AALT…LIFV).

The protein belongs to the ATPase C chain family. In terms of assembly, F-type ATPases have 2 components, F(1) - the catalytic core - and F(0) - the membrane proton channel. F(1) has five subunits: alpha(3), beta(3), gamma(1), delta(1), epsilon(1). F(0) has three main subunits: a(1), b(2) and c(10-14). The alpha and beta chains form an alternating ring which encloses part of the gamma chain. F(1) is attached to F(0) by a central stalk formed by the gamma and epsilon chains, while a peripheral stalk is formed by the delta and b chains.

It localises to the cell inner membrane. In terms of biological role, f(1)F(0) ATP synthase produces ATP from ADP in the presence of a proton or sodium gradient. F-type ATPases consist of two structural domains, F(1) containing the extramembraneous catalytic core and F(0) containing the membrane proton channel, linked together by a central stalk and a peripheral stalk. During catalysis, ATP synthesis in the catalytic domain of F(1) is coupled via a rotary mechanism of the central stalk subunits to proton translocation. Functionally, key component of the F(0) channel; it plays a direct role in translocation across the membrane. A homomeric c-ring of between 10-14 subunits forms the central stalk rotor element with the F(1) delta and epsilon subunits. This is ATP synthase subunit c from Neorickettsia sennetsu (strain ATCC VR-367 / Miyayama) (Ehrlichia sennetsu).